A 323-amino-acid chain; its full sequence is NADH-ubiquinone oxidoreductase chain 1 (323 aa).

The next 8 helical transmembrane spans lie at 8–28, 75–95, 105–125, 151–171, 177–197, 234–254, 258–278, and 298–318; these read LINP…LTLI, MFLI…APLP, LGIL…LGSG, LGLI…TTLM, MWLI…TLAE, ANIL…SSFM, ELTT…FLWV, and FLPI…SMLG.

The protein belongs to the complex I subunit 1 family. As to quaternary structure, core subunit of respiratory chain NADH dehydrogenase (Complex I) which is composed of 45 different subunits.

The protein resides in the mitochondrion inner membrane. It carries out the reaction a ubiquinone + NADH + 5 H(+)(in) = a ubiquinol + NAD(+) + 4 H(+)(out). Its function is as follows. Core subunit of the mitochondrial membrane respiratory chain NADH dehydrogenase (Complex I) which catalyzes electron transfer from NADH through the respiratory chain, using ubiquinone as an electron acceptor. Essential for the catalytic activity and assembly of complex I. In Xenopus laevis (African clawed frog), this protein is NADH-ubiquinone oxidoreductase chain 1 (mt-nd1).